The sequence spans 286 residues: Nucleotide-binding protein HAPS_0087 (286 aa).

Position 8 to 15 (8 to 15 (GRSGSGKS)) interacts with ATP. GTP is bound at residue 56 to 59 (DVRN).

The protein belongs to the RapZ-like family.

Its function is as follows. Displays ATPase and GTPase activities. In Glaesserella parasuis serovar 5 (strain SH0165) (Haemophilus parasuis), this protein is Nucleotide-binding protein HAPS_0087.